The following is a 669-amino-acid chain: MNEKESNILRMQELIEELNKYSYSYYVLDNPIVADKEYDKRYDELVELEEKTGITYPYSPTNRVGDVILKQFQKYTHKSRLWSLDKAQSFEEIIDWHNRNKKAVAEYNSNHEDKLPELKYVLTKKFDGLTINCTYDESGVMIKAATRGTGVIGEDITSQAKTIKSIPLKIKNGSVVEVHGEAIMTKTAFNEYNKKAEVPLKNLRNGAAGALRNLNVRETARRNLSAFFYDVGYNEGKAFKSYMEMMNFIKEMGFPVDEYLKECNTIEEINKEIQYVGDIRSSLDYDIDGVVIVIDDYRTREYLGYTVKFPKWAIAYKFEAEEATTKLLDVEWNVGRSGRVSPTAILEPVELAGVIVKRATLNNMDDIGRKKVKIGSRVFVRRSNDVIPEIMGVTEETEGETNEIEAPTICPYCGSEIVKEGVHLFCENTLSCKPQMVKSIVHFASREAMNIEGFSEKTAEQLFEKLNIKSISDLYRITKEELMSLDKFKDKKASNLINAIEKSKKCDLASFVYSLGIPNVGKKTATDLCKQFKSFENIKKASYDELILVQDIGSIVAESIVEFFKQEKIEKSLNELFELGVTPFYEESEVVENAFTGKTVVATGTLQNYSRTAIKEKLESLGANVAGSVSKKTDYVIAGENAGSKYDKAVQLGVKILTEEEFEQLINNM.

Residues 35–39 and 83–84 contribute to the NAD(+) site; these read DKEYD and SL. The active-site N6-AMP-lysine intermediate is K125. Residues R147, E181, and K317 each coordinate NAD(+). Zn(2+) is bound by residues C410, C413, C426, and C432. Residues 590 to 669 form the BRCT domain; that stretch reads VVENAFTGKT…EEFEQLINNM (80 aa).

The protein belongs to the NAD-dependent DNA ligase family. LigA subfamily. The cofactor is Mg(2+). Mn(2+) is required as a cofactor.

The enzyme catalyses NAD(+) + (deoxyribonucleotide)n-3'-hydroxyl + 5'-phospho-(deoxyribonucleotide)m = (deoxyribonucleotide)n+m + AMP + beta-nicotinamide D-nucleotide.. In terms of biological role, DNA ligase that catalyzes the formation of phosphodiester linkages between 5'-phosphoryl and 3'-hydroxyl groups in double-stranded DNA using NAD as a coenzyme and as the energy source for the reaction. It is essential for DNA replication and repair of damaged DNA. The protein is DNA ligase 2 of Clostridium acetobutylicum (strain ATCC 824 / DSM 792 / JCM 1419 / IAM 19013 / LMG 5710 / NBRC 13948 / NRRL B-527 / VKM B-1787 / 2291 / W).